The following is a 131-amino-acid chain: Small ribosomal subunit protein uS8 (131 aa).

This sequence belongs to the universal ribosomal protein uS8 family. Part of the 30S ribosomal subunit. Contacts proteins S5 and S12.

Functionally, one of the primary rRNA binding proteins, it binds directly to 16S rRNA central domain where it helps coordinate assembly of the platform of the 30S subunit. The protein is Small ribosomal subunit protein uS8 of Pelagibacter ubique (strain HTCC1062).